We begin with the raw amino-acid sequence, 703 residues long: Ubiquitin-like modifier-activating enzyme ATG7 (703 aa).

An N-acetylalanine modification is found at Ala2. The FAP motif motif lies at 15–17 (FAP). A Glycyl lysine isopeptide (Lys-Gly) (interchain with G-Cter in ubiquitin) cross-link involves residue Lys45. Cys572 functions as the Glycyl thioester intermediate in the catalytic mechanism. At Ser698 the chain carries Phosphoserine.

Belongs to the ATG7 family. In terms of assembly, homodimer. Interacts with ATG3; this interaction is essential for the transfer of ATG8-like proteins's thioester from ATG7 to ATG3 and plays a role in the conjugation of ATG12 to ATG5. Interacts with ATG12. Forms intermediate conjugates with GABARAPL1. Forms intermediate conjugates with ATG8-like proteins such as GABARAP, GABARAPL2 or MAP1LC3A. Interacts with EP300 acetyltransferase. Interacts with FOXO1. Acetylated by EP300. Post-translationally, polyubiquitinated on Lys-45 via 'Lys-63'-linked ubiquitin by TRIM32; this modification positiely regulates ATG8 and ATG12 activating enzyme activity leading to initiation of autophagy under metabolic stress. In terms of tissue distribution, widely expressed, especially in kidney, liver, lymph nodes and bone marrow.

It localises to the cytoplasm. The protein resides in the preautophagosomal structure. In terms of biological role, E1-like activating enzyme involved in the 2 ubiquitin-like systems required for cytoplasm to vacuole transport (Cvt) and autophagy. Activates ATG12 for its conjugation with ATG5 as well as the ATG8 family proteins for their conjugation with phosphatidylethanolamine. Both systems are needed for the ATG8 association to Cvt vesicles and autophagosomes membranes. Required for autophagic death induced by caspase-8 inhibition. Facilitates LC3-I lipidation with phosphatidylethanolamine to form LC3-II which is found on autophagosomal membranes. Required for mitophagy which contributes to regulate mitochondrial quantity and quality by eliminating the mitochondria to a basal level to fulfill cellular energy requirements and preventing excess ROS production. Modulates p53/TP53 activity to regulate cell cycle and survival during metabolic stress. Also plays a key role in the maintenance of axonal homeostasis, the prevention of axonal degeneration, the maintenance of hematopoietic stem cells, the formation of Paneth cell granules, as well as in adipose differentiation. Plays a role in regulating the liver clock and glucose metabolism by mediating the autophagic degradation of CRY1 (clock repressor) in a time-dependent manner. The chain is Ubiquitin-like modifier-activating enzyme ATG7 from Homo sapiens (Human).